The primary structure comprises 374 residues: tRNA-specific 2-thiouridylase MnmA (374 aa).

Residues 12–19 (GMSGGVDS) and Met38 contribute to the ATP site. The interval 98–100 (NPD) is interaction with target base in tRNA. Catalysis depends on Cys103, which acts as the Nucleophile. Cys103 and Cys202 form a disulfide bridge. Gly128 contacts ATP. The interaction with tRNA stretch occupies residues 152 to 154 (KDQ). Cys202 serves as the catalytic Cysteine persulfide intermediate. Residues 316 to 317 (RY) are interaction with tRNA.

This sequence belongs to the MnmA/TRMU family.

The protein resides in the cytoplasm. It catalyses the reaction S-sulfanyl-L-cysteinyl-[protein] + uridine(34) in tRNA + AH2 + ATP = 2-thiouridine(34) in tRNA + L-cysteinyl-[protein] + A + AMP + diphosphate + H(+). In terms of biological role, catalyzes the 2-thiolation of uridine at the wobble position (U34) of tRNA, leading to the formation of s(2)U34. The sequence is that of tRNA-specific 2-thiouridylase MnmA from Vibrio campbellii (strain ATCC BAA-1116).